We begin with the raw amino-acid sequence, 381 residues long: E3 ubiquitin-protein ligase ATL15 (381 aa).

The N-terminal stretch at 1 to 23 (MVVMSRVSFYSSFLLLLLEVVVA) is a signal peptide. A helical membrane pass occupies residues 40 to 60 (AIIMIVLVSVFFALGCISVYM). The RING-type; atypical zinc finger occupies 118–160 (CPVCLNEFEDDETLRLIPQCCHVFHPGCIDAWLRSQTTCPLCR).

This sequence belongs to the RING-type zinc finger family. ATL subfamily.

Its subcellular location is the membrane. It carries out the reaction S-ubiquitinyl-[E2 ubiquitin-conjugating enzyme]-L-cysteine + [acceptor protein]-L-lysine = [E2 ubiquitin-conjugating enzyme]-L-cysteine + N(6)-ubiquitinyl-[acceptor protein]-L-lysine.. Its pathway is protein modification; protein ubiquitination. E3 ubiquitin-protein ligase able to catalyze polyubiquitination with ubiquitin-conjugating enzyme E2 UBC8, UBC10, UBC11, UBC28 and UBC29 in vitro. This chain is E3 ubiquitin-protein ligase ATL15 (ATL15), found in Arabidopsis thaliana (Mouse-ear cress).